The primary structure comprises 678 residues: UvrABC system protein B (678 aa).

Positions 31 to 417 constitute a Helicase ATP-binding domain; it reads EGLENGLAHQ…KSGGEIIDQV (387 aa). ATP is bound at residue 44-51; sequence GVTGSGKT. Positions 97-120 match the Beta-hairpin motif; sequence YYDYYQPEAYVPSSDTFIEKDASI. The Helicase C-terminal domain maps to 436-589; it reads QVDDLLSEAR…QMKYNEARGI (154 aa). The region spanning 638–673 is the UVR domain; sequence QQQIKKLEQQMYKYAQDLEFEKAAAVRDQLQQLREH.

This sequence belongs to the UvrB family. In terms of assembly, forms a heterotetramer with UvrA during the search for lesions. Interacts with UvrC in an incision complex.

The protein localises to the cytoplasm. Its function is as follows. The UvrABC repair system catalyzes the recognition and processing of DNA lesions. A damage recognition complex composed of 2 UvrA and 2 UvrB subunits scans DNA for abnormalities. Upon binding of the UvrA(2)B(2) complex to a putative damaged site, the DNA wraps around one UvrB monomer. DNA wrap is dependent on ATP binding by UvrB and probably causes local melting of the DNA helix, facilitating insertion of UvrB beta-hairpin between the DNA strands. Then UvrB probes one DNA strand for the presence of a lesion. If a lesion is found the UvrA subunits dissociate and the UvrB-DNA preincision complex is formed. This complex is subsequently bound by UvrC and the second UvrB is released. If no lesion is found, the DNA wraps around the other UvrB subunit that will check the other stand for damage. This Pasteurella multocida (strain Pm70) protein is UvrABC system protein B.